Consider the following 448-residue polypeptide: Enolase (448 aa).

A (2R)-2-phosphoglycerate-binding site is contributed by glutamine 164. Glutamate 206 functions as the Proton donor in the catalytic mechanism. 3 residues coordinate Mg(2+): aspartate 243, glutamate 289, and aspartate 316. Residues lysine 341, arginine 370, serine 371, and lysine 392 each coordinate (2R)-2-phosphoglycerate. Lysine 341 acts as the Proton acceptor in catalysis.

The protein belongs to the enolase family. The cofactor is Mg(2+).

Its subcellular location is the cytoplasm. It is found in the secreted. It localises to the cell surface. It catalyses the reaction (2R)-2-phosphoglycerate = phosphoenolpyruvate + H2O. The protein operates within carbohydrate degradation; glycolysis; pyruvate from D-glyceraldehyde 3-phosphate: step 4/5. Functionally, catalyzes the reversible conversion of 2-phosphoglycerate (2-PG) into phosphoenolpyruvate (PEP). It is essential for the degradation of carbohydrates via glycolysis. This chain is Enolase, found in Oenococcus oeni (strain ATCC BAA-331 / PSU-1).